The following is a 443-amino-acid chain: 3-phosphoshikimate 1-carboxyvinyltransferase (443 aa).

3 residues coordinate 3-phosphoshikimate: lysine 24, serine 25, and arginine 29. Residue lysine 24 coordinates phosphoenolpyruvate. Residues glycine 96 and arginine 124 each contribute to the phosphoenolpyruvate site. 3-phosphoshikimate-binding residues include serine 168, glutamine 170, aspartate 316, and lysine 343. Glutamine 170 provides a ligand contact to phosphoenolpyruvate. The active-site Proton acceptor is the aspartate 316. Arginine 347 and arginine 391 together coordinate phosphoenolpyruvate.

Belongs to the EPSP synthase family. As to quaternary structure, monomer.

It is found in the cytoplasm. It carries out the reaction 3-phosphoshikimate + phosphoenolpyruvate = 5-O-(1-carboxyvinyl)-3-phosphoshikimate + phosphate. Its pathway is metabolic intermediate biosynthesis; chorismate biosynthesis; chorismate from D-erythrose 4-phosphate and phosphoenolpyruvate: step 6/7. Catalyzes the transfer of the enolpyruvyl moiety of phosphoenolpyruvate (PEP) to the 5-hydroxyl of shikimate-3-phosphate (S3P) to produce enolpyruvyl shikimate-3-phosphate and inorganic phosphate. The chain is 3-phosphoshikimate 1-carboxyvinyltransferase from Dichelobacter nodosus (Bacteroides nodosus).